Reading from the N-terminus, the 132-residue chain is Agouti-signaling protein (132 aa).

The signal sequence occupies residues 1-22 (MDVTXLLLATLLVFLCCFAAYS). N-linked (GlcNAc...) asparagine glycosylation is present at N39. The tract at residues 62–93 (ISRKEAENKRSSKKEASKQKVARPRTPLSVPC) is disordered. A compositionally biased stretch (basic and acidic residues) spans 64–79 (RKEAENKRSSKKEASK). Intrachain disulfides connect C93-C108, C100-C114, C107-C125, C111-C132, and C116-C123. Residues 93–132 (CVSTRGSCKPPAPACCHPCASCQCRFFRSACSCRVINVNC) form the Agouti domain.

The protein resides in the secreted. Functionally, involved in the regulation of melanogenesis. The binding of ASP to MC1R precludes alpha-MSH initiated signaling and thus blocks production of cAMP, leading to a down-regulation of eumelanogenesis (brown/black pigment) and thus increasing synthesis of pheomelanin (yellow/red pigment). The sequence is that of Agouti-signaling protein (ASIP) from Leontopithecus chrysomelas (Golden-headed lion tamarin).